Consider the following 508-residue polypeptide: Transposase (508 aa).

Positions 3–65 (LLSVIRRWHF…PFADRLSAWL (63 aa)) constitute an HTH IS21-type domain. One can recognise an Integrase catalytic domain in the interval 124-299 (LAFEPGEAFQ…TIADIWVEEV (176 aa)).

This sequence belongs to the transposase IS21/IS408/IS1162 family.

Functionally, required for the transposition of the insertion element. In Aminobacter aminovorans (Chelatobacter heintzii), this protein is Transposase (nmoT).